We begin with the raw amino-acid sequence, 311 residues long: CD-NTase-associated protein 6 (311 aa).

ATP-binding positions include 84–89 (GSGKTE) and 215–216 (RR).

This sequence belongs to the AAA ATPase family. In terms of assembly, homohexamer. Forms a 1:1:6 CdnC:Cap7:Cap6 complex.

Functionally, regulates complex assembly in a CBASS antivirus system. CBASS (cyclic oligonucleotide-based antiphage signaling system) provides immunity against bacteriophage. The CD-NTase protein synthesizes cyclic nucleotides in response to infection; these serve as specific second messenger signals. The signals activate a diverse range of effectors, leading to bacterial cell death and thus abortive phage infection. A type III-C(AAA) CBASS system. Binds and disassembles an active CdnC:Cap7 (Cap7 is also called HORMA) complex, inhibiting the complex's ability to synthesize cyclic nucleotide second messengers. An AAA+-ATPase remodeler, in the absence of foreign threat Cap6 (also called Trip13) probably maintains the Cap7 protein in its open, inactive state. Once activated (presumably by a bacteriophage protein) Cap7 binds to and activates its cognate CD-NTase (CdnC in this bacteria) to synthesize cAAA, a cyclic nucleotide second messenger. cAAA activates the NucC endonuclease which degrades all DNA in the infected cell, causing cell death and abortive phage infection. In terms of biological role, protects E.coli strain JP313 against bacteriophage lambda cI- infection. When the cdnC-cap7-cap6-nucC operon is transformed into a susceptible E.coli strain it confers bacteriophage lambda cI- immunity. Mutations in the sensor (Cap7 also called HORMA) or effector proteins (CdnC, NucC) but not the disassembly protein (Cap6 also called Trip13) no longer confer immunity. The presence of the intact operon leads to culture collapse and cell death, which occurs before the phage has finished its replication cycle, thus protecting non-infected bacteria by aborting the phage infection and preventing its propagation. This chain is CD-NTase-associated protein 6, found in Escherichia coli (strain MS 115-1).